The following is a 263-amino-acid chain: 5'-nucleotidase SurE (263 aa).

Residues Asp-8, Asp-9, Ser-40, and Asn-93 each contribute to the a divalent metal cation site.

It belongs to the SurE nucleotidase family. It depends on a divalent metal cation as a cofactor.

The protein localises to the cytoplasm. It catalyses the reaction a ribonucleoside 5'-phosphate + H2O = a ribonucleoside + phosphate. Its function is as follows. Nucleotidase that shows phosphatase activity on nucleoside 5'-monophosphates. This chain is 5'-nucleotidase SurE, found in Caulobacter vibrioides (strain ATCC 19089 / CIP 103742 / CB 15) (Caulobacter crescentus).